Reading from the N-terminus, the 539-residue chain is RING finger protein 37 (539 aa).

Residues 226–249 form a disordered region; the sequence is PALPMESDCDPGGQSESQHSPCTL. Positions 239–249 are enriched in polar residues; the sequence is QSESQHSPCTL. Residues 258 to 338 form the U-box domain; that stretch reads DVPEEFLDPI…DRFLLQHSIS (81 aa). 2 disordered regions span residues 359-399 and 456-479; these read LPSR…EPTA and GTRG…VSGP. Positions 374–395 are enriched in low complexity; that stretch reads HYSLGMSASSSATSPLFSPTTS. The RING-type zinc finger occupies 481 to 526; the sequence is CASCKQAFSSYSTNEPVYQLPCGHLLCRPCLSEKQRSQPMMCTACR.

As to quaternary structure, interacts with UBE2L3. Interacts with VCP. In terms of tissue distribution, expressed in testis and placenta.

The protein localises to the nucleus. It carries out the reaction S-ubiquitinyl-[E2 ubiquitin-conjugating enzyme]-L-cysteine + [acceptor protein]-L-lysine = [E2 ubiquitin-conjugating enzyme]-L-cysteine + N(6)-ubiquitinyl-[acceptor protein]-L-lysine.. It participates in protein modification; protein ubiquitination. In terms of biological role, may have a ubiquitin-protein ligase activity acting as an E3 ubiquitin-protein ligase or as a ubiquitin-ubiquitin ligase promoting elongation of ubiquitin chains on substrates. The chain is RING finger protein 37 (Ubox5) from Mus musculus (Mouse).